The primary structure comprises 82 residues: Turripeptide IX-07 (82 aa).

An N-terminal signal peptide occupies residues 1–21 (MGFYMLLTVALLLTSLMNVEA). Residues 22 to 39 (TPVNQAERSALEKSGLGN) constitute a propeptide that is removed on maturation. 3 disulfides stabilise this stretch: Cys48–Cys70, Cys55–Cys74, and Cys60–Cys81.

In terms of tissue distribution, expressed by the venom duct.

The protein localises to the secreted. The sequence is that of Turripeptide IX-07 from Gemmula speciosa (Splendid gem-turris).